The following is a 113-amino-acid chain: Small ribosomal subunit protein bS6 (113 aa).

It belongs to the bacterial ribosomal protein bS6 family.

Functionally, binds together with bS18 to 16S ribosomal RNA. The chain is Small ribosomal subunit protein bS6 (rpsF) from Synechocystis sp. (strain ATCC 27184 / PCC 6803 / Kazusa).